The chain runs to 326 residues: Glycerol-3-phosphate dehydrogenase [NAD(P)+] (326 aa).

Trp-15, Arg-35, and Lys-107 together coordinate NADPH. The sn-glycerol 3-phosphate site is built by Lys-107, Gly-135, and Ser-137. An NADPH-binding site is contributed by Ala-139. The sn-glycerol 3-phosphate site is built by Lys-190, Asp-243, Ser-253, Arg-254, and Asn-255. Catalysis depends on Lys-190, which acts as the Proton acceptor. Arg-254 serves as a coordination point for NADPH. Residues Leu-273 and Glu-275 each coordinate NADPH.

It belongs to the NAD-dependent glycerol-3-phosphate dehydrogenase family.

It is found in the cytoplasm. It carries out the reaction sn-glycerol 3-phosphate + NAD(+) = dihydroxyacetone phosphate + NADH + H(+). The catalysed reaction is sn-glycerol 3-phosphate + NADP(+) = dihydroxyacetone phosphate + NADPH + H(+). It participates in membrane lipid metabolism; glycerophospholipid metabolism. Its function is as follows. Catalyzes the reduction of the glycolytic intermediate dihydroxyacetone phosphate (DHAP) to sn-glycerol 3-phosphate (G3P), the key precursor for phospholipid synthesis. In Bradyrhizobium sp. (strain BTAi1 / ATCC BAA-1182), this protein is Glycerol-3-phosphate dehydrogenase [NAD(P)+].